Reading from the N-terminus, the 33-residue chain is Gastrin (33 aa).

Pyrrolidone carboxylic acid is present on glutamine 1. Tyrosine 28 carries the post-translational modification Sulfotyrosine. At phenylalanine 33 the chain carries Phenylalanine amide.

It belongs to the gastrin/cholecystokinin family. Sulfation enhances proteolytic processing, and blocks peptide degradation. Levels of sulfation differ between proteolytically-cleaved gastrins and between tissues.

It is found in the secreted. In terms of biological role, gastrin stimulates the stomach mucosa to produce and secrete hydrochloric acid and the pancreas to secrete its digestive enzymes. It also stimulates smooth muscle contraction and increases blood circulation and water secretion in the stomach and intestine. This Macropus giganteus (Eastern gray kangaroo) protein is Gastrin (GAST).